The sequence spans 118 residues: Ribosome-binding factor A (118 aa).

The protein belongs to the RbfA family. In terms of assembly, monomer. Binds 30S ribosomal subunits, but not 50S ribosomal subunits or 70S ribosomes.

The protein localises to the cytoplasm. Functionally, one of several proteins that assist in the late maturation steps of the functional core of the 30S ribosomal subunit. Associates with free 30S ribosomal subunits (but not with 30S subunits that are part of 70S ribosomes or polysomes). Required for efficient processing of 16S rRNA. May interact with the 5'-terminal helix region of 16S rRNA. This Dehalococcoides mccartyi (strain ATCC BAA-2266 / KCTC 15142 / 195) (Dehalococcoides ethenogenes (strain 195)) protein is Ribosome-binding factor A.